We begin with the raw amino-acid sequence, 254 residues long: 5-oxoprolinase subunit A (254 aa).

This sequence belongs to the LamB/PxpA family. Forms a complex composed of PxpA, PxpB and PxpC.

It catalyses the reaction 5-oxo-L-proline + ATP + 2 H2O = L-glutamate + ADP + phosphate + H(+). Its function is as follows. Catalyzes the cleavage of 5-oxoproline to form L-glutamate coupled to the hydrolysis of ATP to ADP and inorganic phosphate. The sequence is that of 5-oxoprolinase subunit A from Burkholderia ambifaria (strain MC40-6).